The following is a 188-amino-acid chain: Crossover junction endodeoxyribonuclease RuvC (188 aa).

Catalysis depends on residues Asp7, Glu68, and Asp141. The Mg(2+) site is built by Asp7, Glu68, and Asp141.

This sequence belongs to the RuvC family. Homodimer which binds Holliday junction (HJ) DNA. The HJ becomes 2-fold symmetrical on binding to RuvC with unstacked arms; it has a different conformation from HJ DNA in complex with RuvA. In the full resolvosome a probable DNA-RuvA(4)-RuvB(12)-RuvC(2) complex forms which resolves the HJ. Requires Mg(2+) as cofactor.

Its subcellular location is the cytoplasm. It catalyses the reaction Endonucleolytic cleavage at a junction such as a reciprocal single-stranded crossover between two homologous DNA duplexes (Holliday junction).. The RuvA-RuvB-RuvC complex processes Holliday junction (HJ) DNA during genetic recombination and DNA repair. Endonuclease that resolves HJ intermediates. Cleaves cruciform DNA by making single-stranded nicks across the HJ at symmetrical positions within the homologous arms, yielding a 5'-phosphate and a 3'-hydroxyl group; requires a central core of homology in the junction. The consensus cleavage sequence is 5'-(A/T)TT(C/G)-3'. Cleavage occurs on the 3'-side of the TT dinucleotide at the point of strand exchange. HJ branch migration catalyzed by RuvA-RuvB allows RuvC to scan DNA until it finds its consensus sequence, where it cleaves and resolves the cruciform DNA. The sequence is that of Crossover junction endodeoxyribonuclease RuvC from Mycobacterium avium (strain 104).